The chain runs to 234 residues: Large ribosomal subunit protein uL1c (234 aa).

It belongs to the universal ribosomal protein uL1 family. As to quaternary structure, part of the 50S ribosomal subunit.

It localises to the plastid. It is found in the chloroplast. Its function is as follows. Binds directly to 23S rRNA. Might be involved in E site tRNA release (Potential). This chain is Large ribosomal subunit protein uL1c (rpl1), found in Rhodomonas salina (Cryptomonas salina).